The primary structure comprises 179 residues: Probable protein archease (179 aa).

Asp55, Asp178, and Val179 together coordinate Ca(2+).

This sequence belongs to the archease family.

Its function is as follows. Activates the tRNA-splicing ligase complex by facilitating the enzymatic turnover of catalytic subunit RtcB. Acts by promoting the guanylylation of RtcB, a key intermediate step in tRNA ligation. Can also alter the NTP specificity of RtcB such that ATP, dGTP or ITP is used efficiently. This is Probable protein archease from Mycobacterium tuberculosis (strain CDC 1551 / Oshkosh).